The following is a 299-amino-acid chain: MTPQCQSYLQQFETYMQSERQLSAHTVRNYMYELQRGSELLPEGVDLLNVGREHWQQVLAKLHRKGLSPRSLSLWLSAIKQWGEFLLRSGVIELNPAKGLSAPKQAKPLPKNIDVDSISHLLAIEGNDPLTLRDKAIMELFYSSGLRLAELAALDLSSVQYDQHEVRVLGKGNKERIVPVGRYAIEAISAWLKCRKQISCEDNALFVTEKGKRLSHRSIQARMSKWGQEQALSMRVHPHKLRHSFATHMLESSADLRAVQELLGHENLSTTQIYTSLDFQHLAKVYDNAHPRAKKQQDK.

The Core-binding (CB) domain maps to 3–87 (PQCQSYLQQF…AIKQWGEFLL (85 aa)). The Tyr recombinase domain maps to 108–287 (PLPKNIDVDS…DFQHLAKVYD (180 aa)). Active-site residues include Arg147, Lys171, His239, Arg242, and His265. Residue Tyr274 is the O-(3'-phospho-DNA)-tyrosine intermediate of the active site.

Belongs to the 'phage' integrase family. XerC subfamily. In terms of assembly, forms a cyclic heterotetrameric complex composed of two molecules of XerC and two molecules of XerD.

The protein resides in the cytoplasm. Functionally, site-specific tyrosine recombinase, which acts by catalyzing the cutting and rejoining of the recombining DNA molecules. The XerC-XerD complex is essential to convert dimers of the bacterial chromosome into monomers to permit their segregation at cell division. It also contributes to the segregational stability of plasmids. This Shewanella sp. (strain ANA-3) protein is Tyrosine recombinase XerC.